Reading from the N-terminus, the 533-residue chain is Probable anion transporter 4, chloroplastic (533 aa).

A run of 12 helical transmembrane segments spans residues 117–137 (MLALALALCNADRVVMSVAIV), 152–172 (IVQSSFLWGYLISPIAGGTLV), 179–199 (VVMAWGVALWSLATFLTPWAA), 203–223 (LWALLAARAMVGVAEGVALPC), 243–263 (IAMAGFQLGNVVGLMLSPILM), 267–287 (GIYGPFVIFGLSGFLWLLVWL), 342–362 (VIVANSMHSWGFFVILSWMPI), 376–396 (AWFSAVPWSMMAFTGYIAGFW), 417–437 (IGFIGPGIALIGLTTAKQPLV), 438–458 (ASAWLSLAVGLKSFSHLGFLI), 474–494 (MCLTAGTLAAIVGTVGAGFFV), and 502–522 (GFILLTAILYLLSALFYNIYA).

This sequence belongs to the major facilitator superfamily. Sodium/anion cotransporter (TC 2.A.1.14) family. Expressed in leaf veins and root tips.

The protein localises to the plastid. Its subcellular location is the chloroplast membrane. In terms of biological role, inorganic phosphate and probable anion transporter. This is Probable anion transporter 4, chloroplastic (ANTR4) from Arabidopsis thaliana (Mouse-ear cress).